The sequence spans 292 residues: High-affinity heme uptake system protein IsdE (292 aa).

Positions 1–19 are cleaved as a signal peptide; that stretch reads MRIIKYLTILVISVVILTS. Cys-20 is lipidated: N-palmitoyl cysteine. Cys-20 carries the S-diacylglycerol cysteine lipid modification. Positions 35 to 291 constitute a Fe/B12 periplasmic-binding domain; the sequence is RIVPTTVALT…QLYDLFYKDK (257 aa). 6 residues coordinate heme: Val-41, Ala-42, Ser-60, Tyr-61, Met-78, and His-229.

The protein belongs to the bacterial solute-binding protein 8 family. Requires heme b as cofactor.

The protein resides in the cell membrane. Involved in heme (porphyrin) scavenging. Binds Fe(2+) and Fe(3+) heme but the largest fraction is Fe(2+) heme. Functions as a high-affinity heme binding protein and probably has a role in relaying heme-iron from cell wall-anchored isd proteins receptors to the probable permease IsdF. The chain is High-affinity heme uptake system protein IsdE (isdE) from Staphylococcus aureus (strain bovine RF122 / ET3-1).